The primary structure comprises 743 residues: Conserved oligomeric Golgi complex subunit 8 (743 aa).

Disordered stretches follow at residues 549-672 (EDGP…TEPE) and 704-743 (TQDD…KKDD). 4 stretches are compositionally biased toward basic and acidic residues: residues 563 to 581 (ESVK…HGTD), 594 to 621 (PVKE…HETP), 633 to 647 (SEAK…HLEL), and 654 to 664 (QEIREQEHKEV). Positions 704-726 (TQDDPIEEEEGWGWGDDDGEEQE) are enriched in acidic residues. Positions 727–743 (ISSKEVESPKEKCKKDD) are enriched in basic and acidic residues.

Belongs to the COG8 family. In terms of assembly, component of the conserved oligomeric Golgi complex which is composed of eight different subunits and is required for normal Golgi morphology and localization.

It is found in the golgi apparatus membrane. In terms of biological role, required for normal Golgi function. The chain is Conserved oligomeric Golgi complex subunit 8 (cogc-8) from Caenorhabditis elegans.